Consider the following 517-residue polypeptide: T-complex protein 11-like protein 2 (517 aa).

The interval 1–59 (MPFNGEKQYVNEDQQSDSESSRFSESTASLSDYGCSRQSFTSDSSSKSSSPASTSPPRG) is disordered. Ser-16 carries the phosphoserine modification. The segment covering 17–55 (DSESSRFSESTASLSDYGCSRQSFTSDSSSKSSSPASTS) has biased composition (low complexity).

The protein belongs to the TCP11 family. As to quaternary structure, interacts with FMNL2; this interaction promotes muscle-derived satellite cell (MDSC) migration and differentiation.

Its subcellular location is the cytoplasm. It localises to the cytoskeleton. Its function is as follows. Promotes the migration of muscle-derived satellite cells (MDSCs) during differentiation throught interaction with FMNL2 and therefore may participate in microfilament assembly. The chain is T-complex protein 11-like protein 2 from Rattus norvegicus (Rat).